Here is a 1146-residue protein sequence, read N- to C-terminus: Probable phospholipid-transporting ATPase IIB (1146 aa).

The Cytoplasmic segment spans residues 1-143 (MADQIPLYPV…IKNQKYNVFT (143 aa)). A helical transmembrane segment spans residues 144–164 (FIPGVLYEQFKFFLNLYFLVV). Topologically, residues 165–172 (SCSQFVPA) are extracellular. A helical transmembrane segment spans residues 173–193 (LKIGYLYTYWAPLGFVLAVTI). Over 194 to 381 (AREAIDEFRR…LDLELNQLTK (188 aa)) the chain is Cytoplasmic. Residues 382 to 402 (ALFLALVVLSVVMVTLQGFAG) form a helical membrane-spanning segment. The Extracellular portion of the chain corresponds to 403 to 407 (PWYRN). The helical transmembrane segment at 408-427 (LFRFLLLFSYIIPISLRVNL) threads the bilayer. Residues 428–938 (DMGKAAYGWM…ALGQFVMHRG (511 aa)) are Cytoplasmic-facing. The active-site 4-aspartylphosphate intermediate is the aspartate 467. ATP is bound by residues aspartate 467, lysine 468, and threonine 469. A Mg(2+)-binding site is contributed by aspartate 467. Threonine 469 is a binding site for Mg(2+). Over residues 508-519 (VHSQPSGHNPSS) the composition is skewed to polar residues. Positions 508-535 (VHSQPSGHNPSSAPLRRSQSSTPKVKKS) are disordered. Glutamate 590, phenylalanine 632, lysine 637, lysine 656, arginine 685, threonine 686, threonine 765, glycine 766, aspartate 767, arginine 847, and lysine 853 together coordinate ATP. Aspartate 873 is a Mg(2+) binding site. Positions 876 and 877 each coordinate ATP. Aspartate 877 provides a ligand contact to Mg(2+). The helical transmembrane segment at 939 to 959 (LIISTMQAVFSSVFYFASVPL) threads the bilayer. Topologically, residues 960 to 961 (YQ) are extracellular. Residues 962 to 982 (GFLMVGYATIYTMFPVFSLVL) traverse the membrane as a helical segment. At 983–1011 (DQDVKPEMAILYPELYKDLTKGRSLSFKT) the chain is on the cytoplasmic side. The chain crosses the membrane as a helical span at residues 1012 to 1032 (FLIWVLISIYQGGILMYGALL). Residues 1033-1040 (LFEDEFVH) are Extracellular-facing. A helical transmembrane segment spans residues 1041–1061 (VVAISFTALILTELLMVALTI). Over 1062 to 1065 (RTWH) the chain is Cytoplasmic. The helical transmembrane segment at 1066–1086 (WLMVVAEFLSLGCYVASLAFL) threads the bilayer. The Extracellular portion of the chain corresponds to 1087 to 1105 (NEYFGIGRVSFGAFLDVAF). A helical transmembrane segment spans residues 1106 to 1128 (ITTVTFLWKVSAITVVSCLPLYV). Residues 1129–1146 (LKYLKRKLSPPSYSKLSS) lie on the Cytoplasmic side of the membrane.

The protein belongs to the cation transport ATPase (P-type) (TC 3.A.3) family. Type IV subfamily. It depends on Mg(2+) as a cofactor. Found in most tissues except spleen and muscle. Most abundant in testis. Also detected in fetal tissues.

The protein resides in the golgi apparatus. The protein localises to the trans-Golgi network membrane. It catalyses the reaction ATP + H2O + phospholipidSide 1 = ADP + phosphate + phospholipidSide 2.. The sequence is that of Probable phospholipid-transporting ATPase IIB (Atp9b) from Mus musculus (Mouse).